Reading from the N-terminus, the 129-residue chain is Cytochrome c oxidase subunit 5B, mitochondrial (129 aa).

A mitochondrion-targeting transit peptide spans Met1–Met31. N6-acetyllysine is present on residues Lys68 and Lys86. Positions 91, 93, 113, and 116 each coordinate Zn(2+). An N6-acetyllysine modification is found at Lys121.

Belongs to the cytochrome c oxidase subunit 5B family. In terms of assembly, component of the cytochrome c oxidase (complex IV, CIV), a multisubunit enzyme composed of 14 subunits. The complex is composed of a catalytic core of 3 subunits MT-CO1, MT-CO2 and MT-CO3, encoded in the mitochondrial DNA, and 11 supernumerary subunits COX4I, COX5A, COX5B, COX6A, COX6B, COX6C, COX7A, COX7B, COX7C, COX8 and NDUFA4, which are encoded in the nuclear genome. The complex exists as a monomer or a dimer and forms supercomplexes (SCs) in the inner mitochondrial membrane with NADH-ubiquinone oxidoreductase (complex I, CI) and ubiquinol-cytochrome c oxidoreductase (cytochrome b-c1 complex, complex III, CIII), resulting in different assemblies (supercomplex SCI(1)III(2)IV(1) and megacomplex MCI(2)III(2)IV(2)).

Its subcellular location is the mitochondrion inner membrane. Its pathway is energy metabolism; oxidative phosphorylation. Component of the cytochrome c oxidase, the last enzyme in the mitochondrial electron transport chain which drives oxidative phosphorylation. The respiratory chain contains 3 multisubunit complexes succinate dehydrogenase (complex II, CII), ubiquinol-cytochrome c oxidoreductase (cytochrome b-c1 complex, complex III, CIII) and cytochrome c oxidase (complex IV, CIV), that cooperate to transfer electrons derived from NADH and succinate to molecular oxygen, creating an electrochemical gradient over the inner membrane that drives transmembrane transport and the ATP synthase. Cytochrome c oxidase is the component of the respiratory chain that catalyzes the reduction of oxygen to water. Electrons originating from reduced cytochrome c in the intermembrane space (IMS) are transferred via the dinuclear copper A center (CU(A)) of subunit 2 and heme A of subunit 1 to the active site in subunit 1, a binuclear center (BNC) formed by heme A3 and copper B (CU(B)). The BNC reduces molecular oxygen to 2 water molecules using 4 electrons from cytochrome c in the IMS and 4 protons from the mitochondrial matrix. This chain is Cytochrome c oxidase subunit 5B, mitochondrial (COX5B), found in Sus scrofa (Pig).